We begin with the raw amino-acid sequence, 257 residues long: Large ribosomal subunit protein uL2 (257 aa).

Residues 207–226 (VEHPFGGGNHQHIGKPSTIR) are disordered.

Belongs to the universal ribosomal protein uL2 family. Component of the large ribosomal subunit.

The protein resides in the cytoplasm. Its function is as follows. Component of the large ribosomal subunit. The ribosome is a large ribonucleoprotein complex responsible for the synthesis of proteins in the cell. This Ictalurus punctatus (Channel catfish) protein is Large ribosomal subunit protein uL2 (rpl8).